Reading from the N-terminus, the 1396-residue chain is DNA-directed RNA polymerase subunit beta' (1396 aa).

Cys73, Cys75, Cys88, and Cys91 together coordinate Zn(2+). Asp467, Asp469, and Asp471 together coordinate Mg(2+). Zn(2+) is bound by residues Cys817, Cys891, Cys898, and Cys901.

The protein belongs to the RNA polymerase beta' chain family. As to quaternary structure, the RNAP catalytic core consists of 2 alpha, 1 beta, 1 beta' and 1 omega subunit. When a sigma factor is associated with the core the holoenzyme is formed, which can initiate transcription. It depends on Mg(2+) as a cofactor. Zn(2+) serves as cofactor.

The catalysed reaction is RNA(n) + a ribonucleoside 5'-triphosphate = RNA(n+1) + diphosphate. Its function is as follows. DNA-dependent RNA polymerase catalyzes the transcription of DNA into RNA using the four ribonucleoside triphosphates as substrates. The polypeptide is DNA-directed RNA polymerase subunit beta' (Orientia tsutsugamushi (strain Boryong) (Rickettsia tsutsugamushi)).